The sequence spans 580 residues: Viral transcription factor IE2 (580 aa).

Basic and acidic residues predominate over residues 1-11 (MESSAKRKMDP). Disordered regions lie at residues 1–30 (MESS…TPVT) and 99–161 (DSSS…VIIK). The segment covering 99–133 (DSSSTGPTLTTHSCSVSSAPLNKPTPTSVAVTNTP) has biased composition (polar residues). Residues lysine 175 and lysine 180 each participate in a glycyl lysine isopeptide (Lys-Gly) (interchain with G-Cter in SUMO) cross-link. Positions 199-202 (CIVI) match the SUMO-interacting motif 1/SIM1 motif. Phosphoserine; by host CK2 is present on residues serine 203 and serine 205. The tract at residues 206–335 (EEEQGEEVET…KSKRISELDN (130 aa)) is disordered. Composition is skewed to low complexity over residues 216 to 236 (RGAT…TSPT), 259 to 271 (SSSS…SASD), and 302 to 317 (AASS…SSGG). Residues 410 to 413 (IQII) carry the SUMO-interacting motif 1/SIM2 motif. The SUMO-interacting motif 1/SIM3 signature appears at 501–504 (VDLL).

It belongs to the HHV-5 IE2 protein family. In terms of assembly, interacts with host SUMO-modified form of TATA-binding protein (TBP)-associated factor 12/TAF12 in a SIM-dependent manner; this interaction increases the transactivation activity of IE2. Interacts with host CHAF1A. Interacts with several components of the host transcriptional machinery including TBP, TF2B and CREB1. Interacts with host DNA replication licensing factor MCM3. Interacts with host PLSCR1; this interaction inhibits IE2 transactivating activity. In terms of processing, phosphorylated by host CK2 at Ser-203 and Ser-205; leading to enhanced SUMOylation. Post-translationally, SUMOylated; SUMOylation is enhanced when IE2 is phosphorylated by host CK2. The sumoylation is necessary for efficient replication of the virus and thus for the function of this viral transcription factor.

Its subcellular location is the host nucleus. Functionally, stimulates viral early and late gene expression and thus play a crucial role in the regulation of productive infection. Selectively drives host RNA Pol II transcription initiation at a subset of viral early-late and late promoters without substantially affecting Pol II transcription of expressed host genes. Mechanistically, forms a repressive complex at the major immediate-early promoter region involving direct association with host nucleosomes and TBP. Concerning activation, stimulates transcription by binding nearby, but not within, core promoter regions. In addition, activates quiescent cells to reenter the cell cycle and up-regulates several E2F-responsive genes, which are responsible for pushing the cell into S phase. In S-phase, inhibits cellular DNA synthesis and blocks further cell cycle progression. This is Viral transcription factor IE2 (UL122) from Human cytomegalovirus (strain AD169) (HHV-5).